The primary structure comprises 983 residues: Receptor-like protein 19 (983 aa).

The N-terminal stretch at 1–25 (MMKGYITLSFLIILIFNFLDEFAAS) is a signal peptide. Over 26–937 (TRHLCDPDQS…EEDEEEVISW (912 aa)) the chain is Extracellular. N-linked (GlcNAc...) asparagine glycosylation is found at asparagine 66 and asparagine 102. 31 LRR repeats span residues 82–108 (FGDV…LFRL), 111–135 (LRFL…LETL), 136–159 (SNLT…IGNL), 161–183 (HLIF…LGYL), 184–207 (SHLT…IGNL), 209–231 (YLTT…LGSL), 232–255 (FHLT…LGNL), 256–281 (SHLT…NLSC), 283–302 (TSFI…SFGN), 303–327 (LNQL…LLNL), 328–351 (RKLS…MSSL), 353–375 (NLKL…LFNI), 376–399 (PSLK…NISS), 401–424 (SNLT…ISKL), 425–448 (VNLK…IFSH), 450–474 (KSIE…ILSS), 475–498 (FKLL…SLSN), 501–524 (LVLI…LRSQ), 525–548 (ELML…LWML), 550–571 (VLNY…TKLG), 578–602 (PPAM…ICEL), 603–628 (PYLS…NIQS), 629–652 (PYLQ…IFES), 654–674 (ISLD…LSHI), 675–700 (SSLG…SLQE), 702–720 (QVLV…KTQF), 721–744 (SKLR…FFVN), 793–817 (LKVF…IGLL), 818–840 (KELH…SMGN), 841–865 (LMAL…LGKL), and 867–890 (YLAY…QFQT). 6 N-linked (GlcNAc...) asparagine glycosylation sites follow: asparagine 137, asparagine 158, asparagine 171, asparagine 190, asparagine 195, and asparagine 206. N-linked (GlcNAc...) asparagine glycosylation is found at asparagine 254 and asparagine 278. The N-linked (GlcNAc...) asparagine glycan is linked to asparagine 347. Asparagine 389, asparagine 396, and asparagine 402 each carry an N-linked (GlcNAc...) asparagine glycan. Residues asparagine 456, asparagine 461, asparagine 492, and asparagine 498 are each glycosylated (N-linked (GlcNAc...) asparagine). 4 N-linked (GlcNAc...) asparagine glycosylation sites follow: asparagine 555, asparagine 558, asparagine 590, and asparagine 616. N-linked (GlcNAc...) asparagine glycosylation is found at asparagine 734 and asparagine 744. The N-linked (GlcNAc...) asparagine glycan is linked to asparagine 824. N-linked (GlcNAc...) asparagine glycosylation is present at asparagine 872. The helical transmembrane segment at 938–958 (IAAVIGFILGTALGLTFGCIL) threads the bilayer. At 959–983 (FSYKPDWFKNPFVRDKRRNIGTITH) the chain is on the cytoplasmic side.

Belongs to the RLP family.

The protein localises to the cell membrane. The protein is Receptor-like protein 19 of Arabidopsis thaliana (Mouse-ear cress).